A 59-amino-acid chain; its full sequence is Large ribosomal subunit protein bL32B (59 aa).

This sequence belongs to the bacterial ribosomal protein bL32 family.

The sequence is that of Large ribosomal subunit protein bL32B (rpmF2) from Enterococcus faecalis (strain ATCC 700802 / V583).